The following is a 122-amino-acid chain: Large ribosomal subunit protein uL14 (122 aa).

This sequence belongs to the universal ribosomal protein uL14 family. In terms of assembly, part of the 50S ribosomal subunit. Forms a cluster with proteins L3 and L19. In the 70S ribosome, L14 and L19 interact and together make contacts with the 16S rRNA in bridges B5 and B8.

In terms of biological role, binds to 23S rRNA. Forms part of two intersubunit bridges in the 70S ribosome. In Granulibacter bethesdensis (strain ATCC BAA-1260 / CGDNIH1), this protein is Large ribosomal subunit protein uL14.